Consider the following 103-residue polypeptide: Small ribosomal subunit protein uS10 (103 aa).

The protein belongs to the universal ribosomal protein uS10 family. As to quaternary structure, part of the 30S ribosomal subunit.

Involved in the binding of tRNA to the ribosomes. The protein is Small ribosomal subunit protein uS10 of Neorickettsia sennetsu (strain ATCC VR-367 / Miyayama) (Ehrlichia sennetsu).